The chain runs to 710 residues: ARM REPEAT PROTEIN INTERACTING WITH ABF2 (710 aa).

The interval methionine 1 to isoleucine 35 is disordered. ARM repeat units follow at residues glutamate 85–serine 127, proline 138–histidine 185, serine 188–phenylalanine 227, aspartate 230–histidine 269, proline 272–serine 311, serine 314–glutamine 353, alanine 355–aspartate 394, leucine 429–serine 468, and glutamate 470–asparagine 509. In terms of domain architecture, BTB spans serine 541–asparagine 608.

Interacts with ABF2. Interacts with DUF7/AIP1. Detected in embryos and most of the vegetative and reproductive organs.

The protein resides in the nucleus. It participates in protein modification; protein ubiquitination. Its function is as follows. May act as a substrate-specific adapter of an E3 ubiquitin-protein ligase complex (CUL3-RBX1-BTB) which mediates the ubiquitination and subsequent proteasomal degradation of target proteins. Acts as a positive regulator of ABA response via the modulation of the transcriptional activity of ABF2, a transcription factor which controls ABA-dependent gene expression via the G-box-type ABA-responsive elements. Negative regulator of seed germination and young seedling growth. The sequence is that of ARM REPEAT PROTEIN INTERACTING WITH ABF2 (ARIA) from Arabidopsis thaliana (Mouse-ear cress).